Reading from the N-terminus, the 253-residue chain is Acidic endochitinase Q (253 aa).

The signal sequence occupies residues Met1–Ala24. Glu92 serves as the catalytic Proton donor. Cys212 and Cys244 are oxidised to a cystine.

It belongs to the glycosyl hydrolase 19 family. Chitinase class I subfamily.

The protein resides in the secreted. It carries out the reaction Random endo-hydrolysis of N-acetyl-beta-D-glucosaminide (1-&gt;4)-beta-linkages in chitin and chitodextrins.. In terms of biological role, defense against chitin-containing fungal pathogens. This chain is Acidic endochitinase Q, found in Nicotiana tabacum (Common tobacco).